The sequence spans 624 residues: MAKIARLPDNVANKISAGEVVQRPASVIKELLENAIDACASKITVTIKDAGKELVQIVDNGIGMSRQDALLSVERFATSKISGVEDLDSLMSLGFRGEALPSIASVSQFELKTKPEGALLGFRFRCDGGEPVEESEVNAEKGTTITVRNLFYNVPARRKFLKSNATEFRHIFESVKSLALAYPEIEWKMVSDDEELFHFRTPDIYERLDAFYGENFSLSLIPVSEENDYLSISGFLGKPGMQKRQKLDQYIYVNRRIIQNRMLSQALQQAYGELLVERQAPFALLFLGIDPSRIDVNVHPAKLEVKFEDERSVRTMFYPVIKRTIQLHDFSPDAAEKEPCSIKEGTLDCSSRKLGFQDIAEPASTTSTLYANYRQGAFGDTPFERPAYAEKEPRPSSINTGFERFEPDLREGGDLFSTTLQARPYEDDNTPDPGENDPKIWQLHNKYIICQIKTGMMIIDQHVAHERVLYERAVDVMNQNVPNSQQLLFPQKIELRAWEYEVFEEIRDDLYRLGFNLRSFGAKTVMIEGIPQDVRPGTEVTILQDMITEFQENSSKLKLERRENLARSYSCRNAIMAGQKLSLEEMRSLIDNLFATRVPYTCPHGRPVIIKLSLDQLDRMFGRK.

Belongs to the DNA mismatch repair MutL/HexB family.

In terms of biological role, this protein is involved in the repair of mismatches in DNA. It is required for dam-dependent methyl-directed DNA mismatch repair. May act as a 'molecular matchmaker', a protein that promotes the formation of a stable complex between two or more DNA-binding proteins in an ATP-dependent manner without itself being part of a final effector complex. The polypeptide is DNA mismatch repair protein MutL (Chlorobium phaeobacteroides (strain DSM 266 / SMG 266 / 2430)).